The following is a 295-amino-acid chain: Probable deoxyhypusine synthase (295 aa).

K267 (nucleophile) is an active-site residue.

The protein belongs to the deoxyhypusine synthase family. NAD(+) serves as cofactor.

It carries out the reaction [eIF5A protein]-L-lysine + spermidine = [eIF5A protein]-deoxyhypusine + propane-1,3-diamine. It functions in the pathway protein modification; eIF5A hypusination. Its function is as follows. Catalyzes the NAD-dependent oxidative cleavage of spermidine and the subsequent transfer of the butylamine moiety of spermidine to the epsilon-amino group of a specific lysine residue of the eIF-5A precursor protein to form the intermediate deoxyhypusine residue. The chain is Probable deoxyhypusine synthase from Pyrobaculum calidifontis (strain DSM 21063 / JCM 11548 / VA1).